We begin with the raw amino-acid sequence, 493 residues long: Glutamyl-tRNA(Gln) amidotransferase subunit A (493 aa).

Residues K78 and S158 each act as charge relay system in the active site. S182 (acyl-ester intermediate) is an active-site residue.

Belongs to the amidase family. GatA subfamily. In terms of assembly, heterotrimer of A, B and C subunits.

The catalysed reaction is L-glutamyl-tRNA(Gln) + L-glutamine + ATP + H2O = L-glutaminyl-tRNA(Gln) + L-glutamate + ADP + phosphate + H(+). In terms of biological role, allows the formation of correctly charged Gln-tRNA(Gln) through the transamidation of misacylated Glu-tRNA(Gln) in organisms which lack glutaminyl-tRNA synthetase. The reaction takes place in the presence of glutamine and ATP through an activated gamma-phospho-Glu-tRNA(Gln). The sequence is that of Glutamyl-tRNA(Gln) amidotransferase subunit A from Methylocella silvestris (strain DSM 15510 / CIP 108128 / LMG 27833 / NCIMB 13906 / BL2).